Reading from the N-terminus, the 865-residue chain is SWI/SNF chromatin-remodeling complex subunit sol1 (865 aa).

Disordered regions lie at residues 1–34, 54–92, 116–143, and 163–183; these read MNNQ…QPAY, MMNT…ASNG, QEKE…QSRE, and VRQT…ANQL. The segment covering 17 to 30 has biased composition (polar residues); it reads SYPTQGQSYNTQEE. Low complexity predominate over residues 121 to 139; sequence AMQQQQQQQQQQQLYQRQM. Residues 188-278 enclose the ARID domain; that stretch reads AASFDKFMVS…YLLPYEEAWL (91 aa). The tract at residues 288-380 is disordered; the sequence is QQAKANHSAN…QTSSSAAPVD (93 aa). A compositionally biased stretch (polar residues) spans 328 to 353; the sequence is HSKSPSPAFTANRFSPAAPTTVSSER. The span at 356–368 shows a compositional bias: pro residues; sequence PPYPSAPTRPTPP. Phosphoserine occurs at positions 852 and 855.

This sequence belongs to the SWI1 family. As to quaternary structure, component of the SWI/SNF global transcription activator complex composed of at least arp9, arp42, snf5, snf22, snf30, sbf59, sol1, ssr1, ssr2, ssr3, ssr4 and tfg3.

The protein resides in the nucleus. Component of the SWI/SNF complex, an ATP-dependent chromatin remodeling complex, required for the positive and negative regulation of gene expression of a large number of genes. It changes chromatin structure by altering DNA-histone contacts within a nucleosome, leading eventually to a change in nucleosome position, thus facilitating or repressing binding of gene-specific transcription factors. The chain is SWI/SNF chromatin-remodeling complex subunit sol1 (sol1) from Schizosaccharomyces pombe (strain 972 / ATCC 24843) (Fission yeast).